The chain runs to 486 residues: Cardiolipin synthase A (486 aa).

A run of 2 helical transmembrane segments spans residues 3-23 (TFYT…IAGV) and 38-58 (MAWL…YLSF). 2 PLD phosphodiesterase domains span residues 219-246 (MDLR…VDPR) and 399-426 (EGGL…DMRS). Residues histidine 224, lysine 226, aspartate 231, histidine 404, lysine 406, and aspartate 411 contribute to the active site.

Belongs to the phospholipase D family. Cardiolipin synthase subfamily. ClsA sub-subfamily.

The protein localises to the cell inner membrane. The enzyme catalyses 2 a 1,2-diacyl-sn-glycero-3-phospho-(1'-sn-glycerol) = a cardiolipin + glycerol. Catalyzes the reversible phosphatidyl group transfer from one phosphatidylglycerol molecule to another to form cardiolipin (CL) (diphosphatidylglycerol) and glycerol. This is Cardiolipin synthase A from Yersinia pseudotuberculosis serotype O:3 (strain YPIII).